Consider the following 496-residue polypeptide: Versicolorin B desaturase stcL (496 aa).

A helical membrane pass occupies residues 3–23 (FLSLPILTALGAVVYVLFQLV). Position 440 (Cys440) interacts with heme.

Belongs to the cytochrome P450 family. Requires heme as cofactor.

It localises to the membrane. It catalyses the reaction versicolorin B + NADPH + O2 + H(+) = versicolorin A + NADP(+) + 2 H2O. It functions in the pathway mycotoxin biosynthesis; sterigmatocystin biosynthesis. In terms of biological role, cytochrome P450 monooxygenase; part of the gene cluster that mediates the biosynthesis of sterigmatocystin (ST), a polyketide-derived furanocoumarin which is part of the most toxic and carcinogenic compounds among the known mycotoxins. The first step in the biosynthesis of sterigmatocystin is the production of hexanoate by the fatty acid synthase (FAS) units stcJ and stcK. The polyketide backbone is assembled by the non-reducing polyketide synthase stcA by condensation of the starter hexanoyl-CoA and 7 malonyl-CoA extender units followed by cyclization and release of norsolorinic acid. Norsolorinic acid is the first stable intermediate in the biosynthesis of sterigmatocystin and is converted into averantin (AVN) by the ketoreductase stcE which reduces the hexanoate ketone to an alcohol. Averantin is then oxidized into 5'-hydroxyaverantin (HAVN) by the cytochrome P450 monooxygenase stcF. 5'-hydroxyaverantin is further converted to 5'-oxyaverantin (OAVN) by the 5'-hydroxyaverantin dehydrogenase stcG. The next step is the conversion of OAVN into averufin (AVF) which is catalyzed by a yet to be identified enzyme. The cytochrome P450 monooxygenase stcB and the flavin-binding monooxygenase stcW are both required for the conversion of averufin to 1-hydroxyversicolorone. The esterase stcI probably catalyzes the formation of versiconal hemiacetal acetate from 1-hydroxyversicolorone. The oxydoreductase stcN then probably catalyzes the biosynthetic step from versiconal to versicolorin B (VERB). The next step is performed by the versicolorin B desaturase stcL to produce versicolorin A (VERA). The ketoreductase stcU and the cytochrome P450 monooxygenase stcS are involved in the conversion of versicolorin A to demethylsterigmatocystin. The Baeyer-Villiger oxidas stcQ and the reductase stcR might be involved in the biosynthetic step from versicolorin A to demethylsterigmatocystin. The final step in the biosynthesis of sterigmatocystin is the methylation of demethylsterigmatocystin catalyzed by the methyltransferase stcP. This is Versicolorin B desaturase stcL from Emericella nidulans (strain FGSC A4 / ATCC 38163 / CBS 112.46 / NRRL 194 / M139) (Aspergillus nidulans).